The primary structure comprises 108 residues: MAEEFVQQRLANNKVTIFVKYTCPFCRNALDILNKFSFKRGAYEIVDIKEFKPENELRDYFEQITGGKTVPRIFFGKTSIGGYSDLLEIDNMDALGDILSSIGVLRTC.

The Glutaredoxin domain occupies 3–106; the sequence is EEFVQQRLAN…DILSSIGVLR (104 aa). Cys23 and Cys26 are disulfide-bonded.

This sequence belongs to the glutaredoxin family.

Its subcellular location is the virion. Its function is as follows. Has thioltransferase and dehydroascorbate reductase activities. The polypeptide is Glutaredoxin-1 (OPG075) (Ectromelia virus (strain Moscow) (ECTV)).